The sequence spans 300 residues: Ribosomal protein L11 methyltransferase (300 aa).

The S-adenosyl-L-methionine site is built by Thr-152, Gly-173, Asp-195, and Asn-234.

The protein belongs to the methyltransferase superfamily. PrmA family.

The protein localises to the cytoplasm. It carries out the reaction L-lysyl-[protein] + 3 S-adenosyl-L-methionine = N(6),N(6),N(6)-trimethyl-L-lysyl-[protein] + 3 S-adenosyl-L-homocysteine + 3 H(+). Methylates ribosomal protein L11. This Paraburkholderia xenovorans (strain LB400) protein is Ribosomal protein L11 methyltransferase.